Here is a 475-residue protein sequence, read N- to C-terminus: MSTAVATRKRAKPAPGPGAAPVAGKRRRKVDSAADRGKSKGGGKMNEEISSDSESESLAPRKTEEEEEEELEETAQEKKLRLAKLYLEQLRQQEEEKAEARAFEEDQVAGRLKEDVLEQRGRLQKSVAKEIQAPAPTDIRVLRGHQLSITCLVITPDDLAIFSAAKDCTIIKWSVETGRKLHVIPRAKKGAQGQPAGHSSHVLCMAISSDGKYLASGDRSKLILIWEAQSCQHLYTFTGHRDAVSGLAFRKGTHQLYSTSHDRSVKVWNAAENSYVETLFGHQDAVAALDALSRECCVTAGGRDGTVRVWKIPEESQLVFYGHQGSIDCIHLINEEHMVSGADDGSVALWGLSKKRPLALQREAHGLHGEPGLEQPFWVSSVAALLNTDLVATGSHNARVRLWQCGEGFRQLDPLCDIPLVGFINSLKFSSAGDFLVAGVGQEHRLGRWWRIKEARNSVCIIPLRRLPVSPVAGS.

Residues 1-75 (MSTAVATRKR…EEEEELEETA (75 aa)) are disordered. The short motif at 8–40 (RKRAKPAPGPGAAPVAGKRRRKVDSAADRGKSK) is the Nuclear localization signal element. Omega-N-methylarginine is present on Arg-10. N6-acetyllysine is present on residues Lys-12 and Lys-25. 4 positions are modified to phosphoserine: Ser-50, Ser-51, Ser-53, and Ser-57. The segment covering 65 to 74 (EEEEEELEET) has biased composition (acidic residues). Lys-113 is covalently cross-linked (Glycyl lysine isopeptide (Lys-Gly) (interchain with G-Cter in SUMO2)). 7 WD repeats span residues 144–183 (GHQL…KLHV), 197–236 (GHSS…HLYT), 239–278 (GHRD…YVET), 281–320 (GHQD…QLVF), 322–360 (GHQG…PLAL), 374–413 (EQPF…RQLD), and 419–460 (PLVG…NSVC). Phosphoserine is present on Ser-470.

The protein belongs to the WD repeat RRP9 family. Interacts specifically with the U3 small nucleolar RNA (U3 snoRNA). Binds a sub-fragment of the U3 snoRNA surrounding the B/C motif (3UBC). This association with the U3BC RNA is dependent on the binding of a protein called 15.5K to the box B/C motif. The association of the protein with the U3BC RNA was found to be also dependent on a conserved RNA structure that flanks the box B/C motif. Part of the small subunit (SSU) processome, composed of more than 70 proteins and the RNA chaperone small nucleolar RNA (snoRNA) U3. Acetylation at Lys-12 and Lys-25 by KAT2B/PCAF under stress impairs pre-rRNA processing. Deacetylation by SIRT7 enhances RRP9-binding to U3 snoRNA, which is a prerequisite for pre-rRNA processing.

The protein resides in the nucleus. It localises to the nucleolus. Functionally, component of a nucleolar small nuclear ribonucleoprotein particle (snoRNP) thought to participate in the processing and modification of pre-ribosomal RNA (pre-rRNA). Part of the small subunit (SSU) processome, first precursor of the small eukaryotic ribosomal subunit. During the assembly of the SSU processome in the nucleolus, many ribosome biogenesis factors, an RNA chaperone and ribosomal proteins associate with the nascent pre-rRNA and work in concert to generate RNA folding, modifications, rearrangements and cleavage as well as targeted degradation of pre-ribosomal RNA by the RNA exosome. In Mus musculus (Mouse), this protein is U3 small nucleolar RNA-interacting protein 2 (Rrp9).